The chain runs to 592 residues: Arginine--tRNA ligase (592 aa).

Positions 134-144 (ANPTGPLHVGH) match the 'HIGH' region motif.

Belongs to the class-I aminoacyl-tRNA synthetase family. As to quaternary structure, monomer.

It is found in the cytoplasm. It carries out the reaction tRNA(Arg) + L-arginine + ATP = L-arginyl-tRNA(Arg) + AMP + diphosphate. This chain is Arginine--tRNA ligase, found in Coxiella burnetii (strain CbuK_Q154) (Coxiella burnetii (strain Q154)).